The primary structure comprises 690 residues: Crooked neck-like protein 1 (690 aa).

HAT repeat units follow at residues 61-93, 95-127, 129-161, 163-194, 196-227, 229-264, 266-300, 310-342, 344-378, 388-424, 459-491, 493-527, 529-560, 565-606, 608-646, and 648-673; these read DYKL…WEES, KEIQ…MEMK, RQVN…MEEM, GNVA…FELR, KEVE…FEEK, AYFA…FEEN, KEFE…FEKK, IIVS…LVES, AEAD…LWVN, KDPE…FEIR, REFD…LETI, GDIE…FEIE, EETE…FELS, GSVA…EFGT, SDKE…YIFP, and DAAN…EREA. The mediates interaction with HSP90 stretch occupies residues 250–467; sequence MDEHLYVAFA…LREFDRCRKL (218 aa). Position 342 is a phosphoserine (Ser-342). Positions 618–626 match the Nuclear localization signal motif; it reads PEKVKKRRK. Residues 667-679 show a composition bias toward basic and acidic residues; the sequence is QQQEREAAEQDPD. The segment at 667–690 is disordered; that stretch reads QQQEREAAEQDPDKDIDESESSSF. The span at 680-690 shows a compositional bias: acidic residues; the sequence is KDIDESESSSF. Position 689 is a phosphoserine (Ser-689).

Belongs to the crooked-neck family. In terms of assembly, identified in the spliceosome C complex. Present in a spliceosome complex assembled in vitro containing CRNKL1, HPRP8BP and SNRPB2. Component of the minor spliceosome, which splices U12-type introns. Interacts with PPIL2 (via the PPIase cyclophilin-type domain); they may form a trimeric complex with HSP90.

It is found in the nucleus. Its subcellular location is the nucleus speckle. In terms of biological role, involved in pre-mRNA splicing process. As a component of the minor spliceosome, involved in the splicing of U12-type introns in pre-mRNAs. The sequence is that of Crooked neck-like protein 1 (Crnkl1) from Mus musculus (Mouse).